The primary structure comprises 116 residues: Appetite-regulating hormone (116 aa).

An N-terminal signal peptide occupies residues Met-1–Ala-23. Ser-26 carries O-decanoyl serine; alternate lipidation. Ser-26 carries O-hexanoyl serine; alternate lipidation. Residue Ser-26 is the site of O-octanoyl serine; alternate attachment. Residues Ser-29 to Ala-67 form a disordered region. The segment covering Glu-31 to Lys-42 has biased composition (basic and acidic residues). Residues Ala-51–Arg-74 constitute a propeptide, removed in mature form. Residue Leu-97 is modified to Leucine amide. A propeptide spans Gly-98–Glu-116 (removed in mature form).

The protein belongs to the motilin family. O-octanoylated by GOAT/MBOAT4. O-octanoylation is essential for ghrelin activity. Post-translationally, amidation of Leu-97 is essential for obestatin activity.

The protein resides in the secreted. Ghrelin is the ligand for growth hormone secretagogue receptor type 1 (GHSR). Induces the release of growth hormone from the pituitary. Has an appetite-stimulating effect, induces adiposity and stimulates gastric acid secretion. Involved in growth regulation. Functionally, obestatin may be the ligand for GPR39. May have an appetite-reducing effect resulting in decreased food intake. May reduce gastric emptying activity and jejunal motility. This Capra hircus (Goat) protein is Appetite-regulating hormone (GHRL).